We begin with the raw amino-acid sequence, 319 residues long: Methionyl-tRNA formyltransferase (319 aa).

116–119 (SLLP) contributes to the (6S)-5,6,7,8-tetrahydrofolate binding site.

It belongs to the Fmt family.

The enzyme catalyses L-methionyl-tRNA(fMet) + (6R)-10-formyltetrahydrofolate = N-formyl-L-methionyl-tRNA(fMet) + (6S)-5,6,7,8-tetrahydrofolate + H(+). Its function is as follows. Attaches a formyl group to the free amino group of methionyl-tRNA(fMet). The formyl group appears to play a dual role in the initiator identity of N-formylmethionyl-tRNA by promoting its recognition by IF2 and preventing the misappropriation of this tRNA by the elongation apparatus. This is Methionyl-tRNA formyltransferase from Wigglesworthia glossinidia brevipalpis.